We begin with the raw amino-acid sequence, 170 residues long: Ribosome maturation factor RimM (170 aa).

A PRC barrel domain is found at 98 to 170 (PDEYYWVDLE…LIVVDWDPDF (73 aa)).

This sequence belongs to the RimM family. In terms of assembly, binds ribosomal protein uS19.

It localises to the cytoplasm. An accessory protein needed during the final step in the assembly of 30S ribosomal subunit, possibly for assembly of the head region. Essential for efficient processing of 16S rRNA. May be needed both before and after RbfA during the maturation of 16S rRNA. It has affinity for free ribosomal 30S subunits but not for 70S ribosomes. The protein is Ribosome maturation factor RimM of Xanthomonas campestris pv. campestris (strain 8004).